Here is a 497-residue protein sequence, read N- to C-terminus: MTGTSNIPTHGKEHKDAPALLPLPAPNPHHTHAAHPGDPSHDRPPSRGKLFIKTHGCQMNEYDSAKMADVLTTTEALELTDNPEEADIILINTCSIREKAQEKVFSQLGRWRALKTNGRDVIIGVGGCVASQEGETIVKRAPYVDLVFGPQTLHRLPDMIRARREQNRPQIDISFPEIEKFDHLPTPRAEGPSAFVSIMEGCSKYCSFCVVPYTRGEEVSRPFEDVLTEIAHLATQGVREINLLGQNVNAYRGAMDPGPSNNTNPAAPPYADLGLLIRAIAQFESIGRIRFTTSHPLEFSDSLVEAYRDIPQLANHLHLPVQSGSDRILSAMKRGYTALEFKSKIRKLRAVRPDISISSDFIIGFPGESDTDFQKTMQLIEDIGFDQSFSFIYSRRPGTPASNLEDHTPDEIKRTRLEHLQKHINAYAADISKRMIGTVQTVLVEGPSKKNPNELTGKTENMRPVNFPGNPRLIGQFIDVHITEALTNSLRGRVHTN.

The segment at 1-50 (MTGTSNIPTHGKEHKDAPALLPLPAPNPHHTHAAHPGDPSHDRPPSRGKL) is disordered. Residues 48-165 (GKLFIKTHGC…LPDMIRARRE (118 aa)) enclose the MTTase N-terminal domain. Cysteine 57, cysteine 94, cysteine 128, cysteine 202, cysteine 206, and cysteine 209 together coordinate [4Fe-4S] cluster. The region spanning 188–430 (RAEGPSAFVS…QKHINAYAAD (243 aa)) is the Radical SAM core domain. A TRAM domain is found at 433 to 496 (KRMIGTVQTV…TNSLRGRVHT (64 aa)).

It belongs to the methylthiotransferase family. MiaB subfamily. In terms of assembly, monomer. [4Fe-4S] cluster serves as cofactor.

The protein localises to the cytoplasm. The catalysed reaction is N(6)-dimethylallyladenosine(37) in tRNA + (sulfur carrier)-SH + AH2 + 2 S-adenosyl-L-methionine = 2-methylsulfanyl-N(6)-dimethylallyladenosine(37) in tRNA + (sulfur carrier)-H + 5'-deoxyadenosine + L-methionine + A + S-adenosyl-L-homocysteine + 2 H(+). Its function is as follows. Catalyzes the methylthiolation of N6-(dimethylallyl)adenosine (i(6)A), leading to the formation of 2-methylthio-N6-(dimethylallyl)adenosine (ms(2)i(6)A) at position 37 in tRNAs that read codons beginning with uridine. The polypeptide is tRNA-2-methylthio-N(6)-dimethylallyladenosine synthase (Xylella fastidiosa (strain M12)).